The following is a 592-amino-acid chain: Inactive glycosyltransferase 25 family member 3 (592 aa).

An N-terminal signal peptide occupies residues 1–19 (MHVARLLPLLLLLGQQLRA). N72, N150, N234, and N357 each carry an N-linked (GlcNAc...) asparagine glycan. The segment at 540–592 (AEWLSDTETSSPWDDDSGRLISQTGSQKALRGPHLHLTGSSGHSLHPHHRDEL) is disordered. A Prevents secretion from ER motif is present at residues 589-592 (RDEL).

Belongs to the glycosyltransferase 25 family.

Its subcellular location is the endoplasmic reticulum lumen. Functionally, probable cell adhesion protein involved in leukocyte transmigration across the blood-brain barrier. Does not express any beta-galactosyltransferase activity in vitro. In Mus musculus (Mouse), this protein is Inactive glycosyltransferase 25 family member 3 (Cercam).